Consider the following 928-residue polypeptide: Eukaryotic translation initiation factor 3 subunit C (928 aa).

2 disordered regions span residues 1–37 and 157–286; these read MSRF…SDDE and FREA…EDGE. The span at 11–20 shows a compositional bias: acidic residues; the sequence is SESESSEEEV. Positions 22–33 are enriched in polar residues; it reads TQFNNKAQNFQF. Phosphoserine is present on residues serine 34, serine 165, serine 177, and serine 186. Over residues 162-171 the composition is skewed to acidic residues; the sequence is DQESDVDEGE. Positions 172–184 are enriched in basic and acidic residues; the sequence is GDVHDSDADRAGD. The span at 215–240 shows a compositional bias: acidic residues; the sequence is DDDDSEDSIDWDPDTESETESSEDEN. Residues 245-264 show a composition bias toward basic and acidic residues; the sequence is MRERFLKRTTEKEDKDDDKR. Positions 265-277 are enriched in basic residues; that stretch reads KDKRKEQKHKVRK. The PCI domain maps to 656 to 832; the sequence is FHMHINLELL…ETVVMHRSEP (177 aa). A disordered region spans residues 864–928; the sequence is FFQRGNMGNR…QQQVHTIDEE (65 aa). The segment covering 898-909 has biased composition (basic residues); the sequence is QRNRNQRGHHKQ. A compositionally biased stretch (low complexity) spans 910-921; the sequence is NQQQNQQQQQQQ.

The protein belongs to the eIF-3 subunit C family. As to quaternary structure, component of the eukaryotic translation initiation factor 3 (eIF-3) complex. The eIF-3 complex interacts with pix.

It is found in the cytoplasm. Its function is as follows. Component of the eukaryotic translation initiation factor 3 (eIF-3) complex, which is involved in protein synthesis of a specialized repertoire of mRNAs and, together with other initiation factors, stimulates binding of mRNA and methionyl-tRNAi to the 40S ribosome. The eIF-3 complex specifically targets and initiates translation of a subset of mRNAs involved in cell proliferation. This is Eukaryotic translation initiation factor 3 subunit C from Drosophila grimshawi (Hawaiian fruit fly).